Reading from the N-terminus, the 435-residue chain is GPI-anchor transamidase component PIGU (435 aa).

Over 2-3 (AA) the chain is Cytoplasmic. The helical transmembrane segment at 4–22 (PLVLVLVVAVTVRAALFRS) threads the bilayer. Residues 23 to 78 (SLAEFISERVEVVSPLSSWKRVVEGLSLLDLGVSPYSGAVFHETPLIIYLFHFLID) are Lumenal-facing. Residues 79-99 (YAELVFMITDALTAIALYFAI) traverse the membrane as a helical segment. Over 100 to 136 (QDFNKVVFKKQKLLLELDQYAPDVAELIRTPMEMRYI) the chain is Cytoplasmic. The next 4 helical transmembrane spans lie at 137 to 158 (PLKV…VAKS), 159 to 178 (TCAI…IKGS), 179 to 194 (AFLS…YQSL), and 195 to 205 (YPLTLFVPGLL). The Cytoplasmic portion of the chain corresponds to 206–222 (YLLQRQYIPVKMKSKAF). Lys-216 and Met-217 together coordinate a cardiolipin. A helical transmembrane segment spans residues 223-244 (WIFSWEYAMMYVGSLVVIICLS). At 245–286 (FFLLSSWDFIPAVYGFILSVPDLTPNIGLFWYFFAEMFEHFS) the chain is on the lumenal side. Residues 287–306 (LFFVCVFQINVFFYTIPLAI) traverse the membrane as a helical segment. Over 307–311 (KLKEH) the chain is Cytoplasmic. Lys-309 is an a cardiolipin binding site. 2 helical membrane passes run 312–331 (PIFF…SYPT) and 332–345 (VGDV…FPVW). Topologically, residues 346–354 (NHLYRFLRN) are cytoplasmic. Residues 355-372 (IFVLTCIIIVCSLLFPVL) form a helical membrane-spanning segment. The Lumenal portion of the chain corresponds to 373 to 384 (WHLWIYAGSANS). A 2-acyl-6-[6-phosphoethanolamine-alpha-D-mannosyl-(1-&gt;2)-6-phosphoethanolamine-alpha-D-mannosyl-(1-&gt;6)-2-phosphoethanolamine-alpha-D-mannosyl-(1-&gt;4)-alpha-D-glucosaminyl]-1-(1-radyl,2-acyl-sn-glycero-3-phospho)-1D-myo-inositol-binding residues include Asn-383 and Asn-385. Residues 385-406 (NFFYAITLTFNVGQILLISDYF) traverse the membrane as a helical segment. Residues 407–435 (YAFLRREYYLTHGLYLTAKDGTEAMLVLK) lie on the Cytoplasmic side of the membrane.

Belongs to the PIGU family. Heteropentamer. Part of the GPI-anchor transamidase complex, consisting of PIGK, PIGT, PIGS, PIGU and GAA1.

It localises to the endoplasmic reticulum membrane. The protein operates within glycolipid biosynthesis; glycosylphosphatidylinositol-anchor biosynthesis. In terms of biological role, component of the glycosylphosphatidylinositol-anchor (GPI-anchor) transamidase (GPI-T) complex that catalyzes the formation of the linkage between a proprotein and a GPI-anchor and participates in GPI anchored protein biosynthesis. Binds the lipid portion of GPI-anchor. May act as an organizer in the transmembrane layer to recruit other subunits, and thus is essential for assembly of the complex. The protein is GPI-anchor transamidase component PIGU of Homo sapiens (Human).